Reading from the N-terminus, the 284-residue chain is Pantothenate synthetase (284 aa).

30–37 (MGNLHDGH) is an ATP binding site. The active-site Proton donor is His-37. (R)-pantoate is bound at residue Gln-61. Beta-alanine is bound at residue Gln-61. 149 to 152 (GEKD) serves as a coordination point for ATP. Gln-155 serves as a coordination point for (R)-pantoate. Residues Ile-178 and 186 to 189 (LSSR) each bind ATP.

This sequence belongs to the pantothenate synthetase family. As to quaternary structure, homodimer.

The protein resides in the cytoplasm. It catalyses the reaction (R)-pantoate + beta-alanine + ATP = (R)-pantothenate + AMP + diphosphate + H(+). It functions in the pathway cofactor biosynthesis; (R)-pantothenate biosynthesis; (R)-pantothenate from (R)-pantoate and beta-alanine: step 1/1. Its function is as follows. Catalyzes the condensation of pantoate with beta-alanine in an ATP-dependent reaction via a pantoyl-adenylate intermediate. This chain is Pantothenate synthetase, found in Salmonella choleraesuis (strain SC-B67).